The primary structure comprises 305 residues: Protoheme IX farnesyltransferase (305 aa).

The next 9 membrane-spanning stretches (helical) occupy residues 38–58 (FITT…SFLG), 60–80 (LDIV…SCAI), 110–130 (AYAF…MTTV), 131–151 (TSAV…TMWS), 161–181 (IGSV…TGTI), 185–205 (AWVL…SLAI), 227–247 (VTKR…FFLG), 249–269 (LGWP…VIGL), and 285–305 (FVYS…ITLF).

Belongs to the UbiA prenyltransferase family. Protoheme IX farnesyltransferase subfamily. Interacts with CtaA.

It is found in the cell membrane. It catalyses the reaction heme b + (2E,6E)-farnesyl diphosphate + H2O = Fe(II)-heme o + diphosphate. It functions in the pathway porphyrin-containing compound metabolism; heme O biosynthesis; heme O from protoheme: step 1/1. Its function is as follows. Converts heme B (protoheme IX) to heme O by substitution of the vinyl group on carbon 2 of heme B porphyrin ring with a hydroxyethyl farnesyl side group. The sequence is that of Protoheme IX farnesyltransferase from Bacillus pumilus (strain SAFR-032).